We begin with the raw amino-acid sequence, 271 residues long: MEFWQHIYSNFNVIAFSIFGLKVHWYGIMYVIALLLALLLAKFFVKKFQLDINEKHLDSYFIWVEIGVILGARLGYILIYDANTMYYITHPWQIFNPYINGEFVGIRGMSYHGAIIGFLIATLLFCKKYKTNPWIFLDLVALSVPLAYVFGRIGNFLNQELFGRITNVPWGIYVDGILRHPSQLYEAFLEGIVVFIIVYLARFKQSFQGELILVYAGAYSLARFICEFYREPDFGIGFVLWGMSMGQILSFIMFITALLVYICIKFKKVNI.

A run of 7 helical transmembrane segments spans residues 25–45 (WYGI…KFFV), 60–80 (YFIW…ILIY), 103–123 (FVGI…IATL), 134–154 (WIFL…GRIG), 181–201 (PSQL…VYLA), 209–229 (GELI…CEFY), and 235–255 (GIGF…IMFI). Arginine 152 is an a 1,2-diacyl-sn-glycero-3-phospho-(1'-sn-glycerol) binding site.

Belongs to the Lgt family.

Its subcellular location is the cell inner membrane. The catalysed reaction is L-cysteinyl-[prolipoprotein] + a 1,2-diacyl-sn-glycero-3-phospho-(1'-sn-glycerol) = an S-1,2-diacyl-sn-glyceryl-L-cysteinyl-[prolipoprotein] + sn-glycerol 1-phosphate + H(+). Its pathway is protein modification; lipoprotein biosynthesis (diacylglyceryl transfer). In terms of biological role, catalyzes the transfer of the diacylglyceryl group from phosphatidylglycerol to the sulfhydryl group of the N-terminal cysteine of a prolipoprotein, the first step in the formation of mature lipoproteins. This Campylobacter jejuni subsp. jejuni serotype O:23/36 (strain 81-176) protein is Phosphatidylglycerol--prolipoprotein diacylglyceryl transferase.